The primary structure comprises 440 residues: Protein TENP (440 aa).

Expressed in developing retina and brain, but not in heart, liver or kidney. In brain, located in a narrow strip in the boundary between the ventricular zone (consisting of proliferating cells) and the intermediate zone (consisting of postmitotic, differentiating cells). Expressed in all major regions of the developing brain, including the myelencephalon, the mesencephalon, the telencephalon and the diencephalon. In the developing retina, expression is scattered across the retinal neural epithelium. Expressed in egg white (at protein level). Expressed in the magnum of the oviduct (at protein level).

Its function is as follows. May play a role in the developmental transition from cell proliferation to cell differentiation during neurogenesis. The sequence is that of Protein TENP (TENP) from Gallus gallus (Chicken).